The sequence spans 195 residues: ATP-dependent Clp protease proteolytic subunit (195 aa).

The active-site Nucleophile is the serine 98. Histidine 123 is a catalytic residue.

It belongs to the peptidase S14 family. In terms of assembly, fourteen ClpP subunits assemble into 2 heptameric rings which stack back to back to give a disk-like structure with a central cavity, resembling the structure of eukaryotic proteasomes.

The protein resides in the cytoplasm. The catalysed reaction is Hydrolysis of proteins to small peptides in the presence of ATP and magnesium. alpha-casein is the usual test substrate. In the absence of ATP, only oligopeptides shorter than five residues are hydrolyzed (such as succinyl-Leu-Tyr-|-NHMec, and Leu-Tyr-Leu-|-Tyr-Trp, in which cleavage of the -Tyr-|-Leu- and -Tyr-|-Trp bonds also occurs).. Cleaves peptides in various proteins in a process that requires ATP hydrolysis. Has a chymotrypsin-like activity. Plays a major role in the degradation of misfolded proteins. The polypeptide is ATP-dependent Clp protease proteolytic subunit (Helicobacter pylori (strain J99 / ATCC 700824) (Campylobacter pylori J99)).